The sequence spans 247 residues: MNVLPCSINTLKGLYDISEVEVGQHFYWQIGGFQVHAQVLITSWVVIAILLGSAAIAVRNPQTIPTDGQNFFEYVLEFIRDLTKTQIGEEYGPWVPFIGTMFLFIFVSNWSGALLPRKIIQLPHGELAAPTNDINTTVALALLTSVAYFYAGLTKKGLGYFGKYIQPTPILLPINILEDFTKPLSLSFRLFGNILADELVVVVLVSLVPLVVPIPVMFLGLFTSGIQALIFATLAAAYIGESMEGHH.

5 consecutive transmembrane segments (helical) span residues glutamine 38 to valine 58, valine 95 to leucine 115, isoleucine 134 to threonine 154, leucine 199 to leucine 219, and glycine 220 to glycine 240.

Belongs to the ATPase A chain family. F-type ATPases have 2 components, CF(1) - the catalytic core - and CF(0) - the membrane proton channel. CF(1) has five subunits: alpha(3), beta(3), gamma(1), delta(1), epsilon(1). CF(0) has four main subunits: a, b, b' and c.

It localises to the plastid. The protein localises to the chloroplast thylakoid membrane. In terms of biological role, key component of the proton channel; it plays a direct role in the translocation of protons across the membrane. In Calycanthus floridus var. glaucus (Eastern sweetshrub), this protein is ATP synthase subunit a, chloroplastic.